Here is a 195-residue protein sequence, read N- to C-terminus: Cholesin (195 aa).

The segment at 1–78 (MAKHKRKGLE…KEEKKRLREA (78 aa)) is disordered. Composition is skewed to basic and acidic residues over residues 8-18 (GLEGTGKESKR) and 26-39 (ETPRTSEAGPDKET). A phosphoserine mark is found at S41, S48, and S52. The span at 53–77 (PEERRVLERKLKKERKKEEKKRLRE) shows a compositional bias: basic and acidic residues. Residue S96 is modified to Phosphoserine.

As to expression, secreted via exosomes, secreted from the instestine, secretion is induced by feeding and cholesterol absorption. Expressed in enterocytes.

It localises to the secreted. In terms of biological role, hormone secreted from the intestine in response to cholesterol, where it acts to inhibit cholesterol synthesis in the liver and VLDL secretion,leading to a reduction in circulating cholesterol levels. Acts through binding to its receptor, GPR146. In Mus musculus (Mouse), this protein is Cholesin (Chlsn).